The following is a 416-amino-acid chain: MSLSNKLSIRDLNVKDKRVLIRVDFNVPLDGTTITNNQRIVAALPTIKYALEQKAKTVVLMSHLGRPDGKKVDKYSLAPVAKEVERLLGKKVTFLEDCVGEGVENYVKNACDGEVILLENLRFHAEEEGSSKGPDGKKVKADLEKVKEFRRSLTALGDVYINDAFGTAHRAHSSMVGVELPQKAAGFLVKKELEYFAKALESPERPFLAILGGAKVSDKIQLIDNLIAKVDSLIICGGMAFTFKKTLENVKIGNSLFDADGAKTVGEVMEKAKKHDVEVVLPVDYITADKFAKDAQVGYATDQEGIPDGWMGLDCGEKSVELYKQTIAKAKTILWNGPAGVFEFDNFAKGTKATLDCAVEAAQSGKIVIIGGGDTATVAAKYGVEDKLSHVSTGGGASLELLEGKDLPGVSALSSK.

Residues Val-23, Asp-24, Phe-25, Asn-26, Gln-38, Arg-39, Ser-62, His-63, Gly-65, Arg-66, Leu-121, Arg-122, His-169, and Arg-170 each coordinate (2R)-3-phosphoglycerate. Gly-213 contacts ADP. Gly-213 is a binding site for CDP. AMP-binding residues include Ala-214 and Lys-215. Ala-214 is an ATP binding site. Ala-214 is a binding site for Mg(2+). Residue Asp-218 coordinates CDP. Asp-218 contacts Mg(2+). Lys-219 provides a ligand contact to AMP. Residue Lys-219 coordinates ATP. Gly-237 is an ADP binding site. Position 237 (Gly-237) interacts with CDP. Residues Gly-238 and Gly-312 each contribute to the AMP site. ATP is bound by residues Gly-238 and Gly-312. CDP-binding residues include Gly-337, Ala-339, and Phe-342. Phe-342 provides a ligand contact to ADP. Glu-343 serves as a coordination point for AMP. The ATP site is built by Glu-343, Asp-374, and Thr-375. Residue Asp-374 coordinates Mg(2+).

The protein belongs to the phosphoglycerate kinase family. In terms of assembly, monomer. It depends on Mg(2+) as a cofactor.

The protein localises to the cytoplasm. Its subcellular location is the mitochondrion. It catalyses the reaction (2R)-3-phosphoglycerate + ATP = (2R)-3-phospho-glyceroyl phosphate + ADP. The protein operates within carbohydrate degradation; glycolysis; pyruvate from D-glyceraldehyde 3-phosphate: step 2/5. Catalyzes one of the two ATP producing reactions in the glycolytic pathway via the reversible conversion of 1,3-diphosphoglycerate to 3-phosphoglycerate. Both L- and D- forms of purine and pyrimidine nucleotides can be used as substrates, but the activity is much lower on pyrimidines. Negatively regulates the biosynthesis of acetyl-CoA from pyruvate in the mitochondrion. This chain is Phosphoglycerate kinase (PGK), found in Funneliformis mosseae (Endomycorrhizal fungus).